Consider the following 1641-residue polypeptide: Cortactin-binding protein 2 (1641 aa).

A disordered region spans residues 1–27; sequence MATDGASCEPDFSRAPEDAAGAPAEAA. Residues 119–276 are a coiled coil; sequence RKMQERMSTQ…EQLKRGNDSK (158 aa). 3 disordered regions span residues 361 to 433, 446 to 472, and 488 to 588; these read SHGD…HPGL, GSNA…PTSR, and ALSR…PQGN. Polar residues predominate over residues 385 to 405; the sequence is GPSTGSTPDLTSSPTALPSTV. Arg-491 bears the Asymmetric dimethylarginine mark. Residues 497–506 show a composition bias toward pro residues; sequence AGAPPRPGAP. The span at 576-586 shows a compositional bias: polar residues; the sequence is TVASSPSSLPQ. ANK repeat units follow at residues 702–732, 736–765, 769–798, 802–831, 835–864, and 903–933; these read GRPT…DINY, DGHS…QVNA, NGFT…NINH, GGQT…DRSV, DGWT…PAHG, and EGWT…EPER. A disordered region spans residues 1442–1468; it reads AWRKVSTSPRKKSGRFSSPTWNKPDLS. Position 1512 is a phosphoserine (Ser-1512). A disordered region spans residues 1544–1641; that stretch reads LRRFDSSGNN…NSRDLEPTQK (98 aa). Composition is skewed to polar residues over residues 1551–1562 and 1570–1579; these read GNNPVFSATVNN and KEVSPLSSHQ. Positions 1580-1590 are enriched in basic and acidic residues; the sequence is MTERSNSKSKT. The segment covering 1612–1626 has biased composition (low complexity); sequence SQNTKRSSSSSNTRQ.

In terms of assembly, interacts with CTTN/cortactin SH3 domain. Interacts with STRN, STRN4/zinedin and MOB4/phocein; this interactions mediate the association with the STRIPAK core complex and may regulate dendritic spine distribution of the STRIPAK complex in hippocampal neurons. Activation of glutamate receptors weakens the interaction with STRN and STRN4.

It localises to the cytoplasm. Its subcellular location is the cell cortex. It is found in the cell projection. The protein localises to the dendritic spine. In terms of biological role, regulates the dendritic spine distribution of CTTN/cortactin in hippocampal neurons, and thus controls dendritic spinogenesis and dendritic spine maintenance. Associates with the striatin-interacting phosphatase and kinase (STRIPAK) core complex to regulate dendritic spine distribution of the STRIPAK complex in hippocampal neurons. This chain is Cortactin-binding protein 2 (CTTNBP2), found in Ovis aries (Sheep).